Here is a 445-residue protein sequence, read N- to C-terminus: ATP-dependent protease ATPase subunit HslU (445 aa).

Residues isoleucine 17, 59–64 (GVGKTE), aspartate 254, glutamate 319, and arginine 391 contribute to the ATP site.

This sequence belongs to the ClpX chaperone family. HslU subfamily. A double ring-shaped homohexamer of HslV is capped on each side by a ring-shaped HslU homohexamer. The assembly of the HslU/HslV complex is dependent on binding of ATP.

It localises to the cytoplasm. In terms of biological role, ATPase subunit of a proteasome-like degradation complex; this subunit has chaperone activity. The binding of ATP and its subsequent hydrolysis by HslU are essential for unfolding of protein substrates subsequently hydrolyzed by HslV. HslU recognizes the N-terminal part of its protein substrates and unfolds these before they are guided to HslV for hydrolysis. The polypeptide is ATP-dependent protease ATPase subunit HslU (Pseudomonas fluorescens (strain SBW25)).